The sequence spans 58 residues: MAQKKKSSGSGLMSSAGLMTYYDADKKAIHVQPKTVFIFGAICGIVILAFSAGFGLWP.

Over 1-32 (MAQKKKSSGSGLMSSAGLMTYYDADKKAIHVQ) the chain is Cytoplasmic. A helical membrane pass occupies residues 33–54 (PKTVFIFGAICGIVILAFSAGF). Residues 55-58 (GLWP) are Extracellular-facing.

The protein belongs to the SEC61-beta family. In terms of assembly, component of the protein translocase complex. Heterotrimer consisting of alpha (SecY), beta (SecG) and gamma (SecE) subunits. Can form oligomers of the heterotrimer.

It is found in the cell membrane. Its function is as follows. Involved in protein export. The function of the beta subunit is unknown, but it may be involved in stabilization of the trimeric complex. The sequence is that of Preprotein translocase subunit SecG from Methanococcoides burtonii (strain DSM 6242 / NBRC 107633 / OCM 468 / ACE-M).